The following is a 407-amino-acid chain: UDP-N-acetyl-D-mannosamine dehydrogenase (407 aa).

This sequence belongs to the UDP-glucose/GDP-mannose dehydrogenase family.

The enzyme catalyses UDP-N-acetyl-alpha-D-mannosamine + 2 NAD(+) + H2O = UDP-N-acetyl-alpha-D-mannosaminouronate + 2 NADH + 3 H(+). It participates in capsule biogenesis; capsule polysaccharide biosynthesis. Functionally, dehydrogenase involved in the biosynthesis of capsular polysaccharides. Catalyzes the NAD(+)-dependent oxidation of UDP-N-acetyl-D-mannosamine (UDP-ManNAc) to UDP-N-acetyl-D-mannosaminuronic acid (UDP-ManNAcA). In Campylobacter jejuni, this protein is UDP-N-acetyl-D-mannosamine dehydrogenase.